A 243-amino-acid chain; its full sequence is Adenosylcobinamide-GDP ribazoletransferase (243 aa).

The next 5 membrane-spanning stretches (helical) occupy residues 31 to 51 (LLFY…FNAL), 55 to 75 (APLL…SGGL), 109 to 129 (IAVV…VALI), 135 to 155 (IGLL…FLGT), and 188 to 208 (VVLA…CFYW).

This sequence belongs to the CobS family. It depends on Mg(2+) as a cofactor.

It localises to the cell inner membrane. It carries out the reaction alpha-ribazole + adenosylcob(III)inamide-GDP = adenosylcob(III)alamin + GMP + H(+). The enzyme catalyses alpha-ribazole 5'-phosphate + adenosylcob(III)inamide-GDP = adenosylcob(III)alamin 5'-phosphate + GMP + H(+). Its pathway is cofactor biosynthesis; adenosylcobalamin biosynthesis; adenosylcobalamin from cob(II)yrinate a,c-diamide: step 7/7. In terms of biological role, joins adenosylcobinamide-GDP and alpha-ribazole to generate adenosylcobalamin (Ado-cobalamin). Also synthesizes adenosylcobalamin 5'-phosphate from adenosylcobinamide-GDP and alpha-ribazole 5'-phosphate. The protein is Adenosylcobinamide-GDP ribazoletransferase of Pseudomonas syringae pv. tomato (strain ATCC BAA-871 / DC3000).